Reading from the N-terminus, the 1492-residue chain is DNA polymerase alpha catalytic subunit (1492 aa).

3 disordered regions span residues 34–112 (DFIV…VEQS), 162–195 (SVTL…DVNP), and 210–234 (ANSY…EMAN). A compositionally biased stretch (basic and acidic residues) spans 42 to 55 (YGYRDHGGEIWDRD). Residues 93–105 (NAASTNPSAQQKP) show a composition bias toward polar residues. The segment covering 166 to 178 (ESREEQERRRQSE) has biased composition (basic and acidic residues). Polar residues-rich tracts occupy residues 184-194 (ANIGQNQSDVN) and 210-224 (ANSY…SVSK). Zn(2+) contacts are provided by cysteine 1314, cysteine 1317, cysteine 1341, cysteine 1344, cysteine 1375, cysteine 1380, cysteine 1393, and cysteine 1398. The CysA-type zinc-finger motif lies at 1314–1344 (CPHCAHNYHFPGILVPSSNNTELTGLACVKC). The CysB motif signature appears at 1375–1398 (CKEPQCGMKTNQLLLNNKCIVKGC).

Belongs to the DNA polymerase type-B family.

Its subcellular location is the nucleus. The catalysed reaction is DNA(n) + a 2'-deoxyribonucleoside 5'-triphosphate = DNA(n+1) + diphosphate. Polymerase alpha in a complex with DNA primase is a replicative polymerase. The protein is DNA polymerase alpha catalytic subunit of Sterkiella nova (Ciliate).